Consider the following 264-residue polypeptide: Regulatory protein RecX (264 aa).

It belongs to the RecX family.

It is found in the cytoplasm. Functionally, modulates RecA activity. The sequence is that of Regulatory protein RecX from Limosilactobacillus reuteri (strain DSM 20016) (Lactobacillus reuteri).